The primary structure comprises 1418 residues: Sterol 3-beta-glucosyltransferase (1418 aa).

The segment covering 1–16 (MRPFLDDAKRRVDRKL) has biased composition (basic and acidic residues). 3 disordered regions span residues 1–59 (MRPF…SREG), 83–188 (ARFD…RSAT), and 207–233 (LKASSTERSQPSLDESGEKGPRGASVS). Polar residues predominate over residues 18 to 28 (ASRQSLSTSRL). Basic and acidic residues-rich tracts occupy residues 35 to 44 (DRLKDNHDAQ) and 95 to 105 (SEQRPRKESSV). The segment covering 106 to 115 (RKGTSASANT) has biased composition (polar residues). The span at 116 to 126 (SSPLDSSQRSS) shows a compositional bias: low complexity. Basic and acidic residues-rich tracts occupy residues 127-139 (SRTDGKSEKESGT) and 147-166 (TISDHKLFRPFESNSKHEPQ). Polar residues predominate over residues 209-219 (ASSTERSQPSL). Positions 249 to 288 (EKVLVEYACSLLQSILLQGYMYVTEGHICFYAYLPKKSTV) constitute a GRAM 1 domain. Positions 289 to 387 (AIKSGYLYKR…WVKALQKVIF (99 aa)) constitute a PH domain. The segment at 462–651 (ISSQHLSPQP…DPTKSFSGAP (190 aa)) is disordered. A compositionally biased stretch (polar residues) spans 486–497 (RWSLTSGTSRVL). The span at 508–519 (ASASTSHTSLAH) shows a compositional bias: low complexity. Residues 534–575 (SESILNSFEQGTESSAAWQSMTDAAESASQILNRSDVFQSPT) show a composition bias toward polar residues. Residues 578-598 (GLDRRPSGGERRGRRNSDETA) are compositionally biased toward basic and acidic residues. Over residues 599–612 (RSLSTRANVGTGQQ) the composition is skewed to polar residues. Positions 615 to 633 (ELGRRMDGDTSGREARDST) are enriched in basic and acidic residues. Residues 635–651 (ESDQYTQDPTKSFSGAP) show a composition bias toward polar residues. The GRAM 2 domain occupies 733–799 (DRFRAHFALP…RDIENVEKEK (67 aa)). Positions 920, 921, 923, 1223, 1225, 1238, 1242, 1243, 1262, and 1263 each coordinate UDP-alpha-D-glucose. The disordered stretch occupies residues 1339-1418 (SIASSTPFSP…SGPGRKLSGR (80 aa)). Residues 1341 to 1355 (ASSTPFSPTPSAKTT) show a composition bias toward low complexity. The segment covering 1358–1379 (QDADDDVEDSEEWTFVGDDTDM) has biased composition (acidic residues). The span at 1380–1391 (EMSRRLRDRAIS) shows a compositional bias: basic and acidic residues.

It belongs to the glycosyltransferase 28 family.

It localises to the cytoplasm. The protein resides in the preautophagosomal structure membrane. The catalysed reaction is a sterol + UDP-alpha-D-glucose = a sterol 3-beta-D-glucoside + UDP + H(+). The enzyme catalyses ergosterol + UDP-alpha-D-glucose = ergosteryl 3-beta-D-glucoside + UDP + H(+). Its function is as follows. Sterol glycosyltransferase responsible for the glycosylation of ergosterol to form ergosterol-glucoside. In Neosartorya fischeri (strain ATCC 1020 / DSM 3700 / CBS 544.65 / FGSC A1164 / JCM 1740 / NRRL 181 / WB 181) (Aspergillus fischerianus), this protein is Sterol 3-beta-glucosyltransferase.